A 252-amino-acid chain; its full sequence is Triosephosphate isomerase (252 aa).

10-12 (NWK) provides a ligand contact to substrate. H96 (electrophile) is an active-site residue. The active-site Proton acceptor is E168. Residues G174, S213, and 234–235 (GG) each bind substrate.

This sequence belongs to the triosephosphate isomerase family. Homodimer.

The protein resides in the cytoplasm. It catalyses the reaction D-glyceraldehyde 3-phosphate = dihydroxyacetone phosphate. Its pathway is carbohydrate biosynthesis; gluconeogenesis. The protein operates within carbohydrate degradation; glycolysis; D-glyceraldehyde 3-phosphate from glycerone phosphate: step 1/1. Functionally, involved in the gluconeogenesis. Catalyzes stereospecifically the conversion of dihydroxyacetone phosphate (DHAP) to D-glyceraldehyde-3-phosphate (G3P). The protein is Triosephosphate isomerase of Nitrosomonas eutropha (strain DSM 101675 / C91 / Nm57).